A 142-amino-acid chain; its full sequence is Hemoglobin subunit alpha (142 aa).

Position 1 is an N-acetylserine (S1). A Globin domain is found at 1 to 142; that stretch reads SLSDKDKAAV…VALALAERYR (142 aa). O2 is bound at residue H59. Residue H88 coordinates heme b.

Belongs to the globin family. Hb1 is a heterotetramer of two alpha chains and two beta chains. HbC is a heterotetramer of two alpha chains and two beta-C chains. As to expression, red blood cells.

Its function is as follows. Involved in oxygen transport from gills to the various peripheral tissues. The sequence is that of Hemoglobin subunit alpha (hba) from Trematomus bernacchii (Emerald rockcod).